A 261-amino-acid chain; its full sequence is Eukaryotic translation initiation factor 3 subunit G (261 aa).

A disordered region spans residues 156–180 (QDADSKNALGLRGDGRQMERNRSDE). Residues 168 to 180 (GDGRQMERNRSDE) are compositionally biased toward basic and acidic residues. Residues 181 to 259 (NTCRVTNLPQ…MVLKVEWTRP (79 aa)) enclose the RRM domain.

This sequence belongs to the eIF-3 subunit G family. In terms of assembly, component of the eukaryotic translation initiation factor 3 (eIF-3) complex.

The protein resides in the cytoplasm. In terms of biological role, RNA-binding component of the eukaryotic translation initiation factor 3 (eIF-3) complex, which is involved in protein synthesis of a specialized repertoire of mRNAs and, together with other initiation factors, stimulates binding of mRNA and methionyl-tRNAi to the 40S ribosome. The eIF-3 complex specifically targets and initiates translation of a subset of mRNAs involved in cell proliferation. This subunit can bind 18S rRNA. This is Eukaryotic translation initiation factor 3 subunit G from Caenorhabditis briggsae.